Consider the following 285-residue polypeptide: Integrin alpha-1 (285 aa).

Residues 1-285 (ENMTFGTTLV…HYSQDWVMLG (285 aa)) lie on the Extracellular side of the membrane. 4 N-linked (GlcNAc...) asparagine glycosylation sites follow: asparagine 2, asparagine 40, asparagine 208, and asparagine 232. Residues 66 to 279 (IVLDGSNSIY…QAGFSAHYSQ (214 aa)) enclose the VWFA domain.

The protein belongs to the integrin alpha chain family. Heterodimer of an alpha and a beta subunit. Alpha-1 associates with beta-1.

It localises to the membrane. In terms of biological role, integrin alpha-1/beta-1 is a receptor for laminin and collagen. It recognizes the proline-hydroxylated sequence G-F-P-G-E-R in collagen. Involved in anchorage-dependent, negative regulation of EGF-stimulated cell growth. This is Integrin alpha-1 (ITGA1) from Gallus gallus (Chicken).